A 376-amino-acid chain; its full sequence is Lipoprotein p33 (376 aa).

An N-terminal signal peptide occupies residues 1–30 (MKIKKIKLLKALALTGAFGIVATVPVIVSS). The N-palmitoyl cysteine moiety is linked to residue Cys-31. Cys-31 carries the S-diacylglycerol cysteine lipid modification. A disordered region spans residues 33–59 (STDNNGGTGDNNTGGGGSGTDQQQGTT). Residues 38–51 (GGTGDNNTGGGGSG) are compositionally biased toward gly residues.

Belongs to the p35 lipoprotein family.

It localises to the cell membrane. This chain is Lipoprotein p33, found in Malacoplasma penetrans (strain HF-2) (Mycoplasma penetrans).